Consider the following 911-residue polypeptide: DNA ligase 4 (911 aa).

12 residues coordinate ATP: Glu-271, Thr-272, Lys-273, Leu-274, Arg-278, Glu-331, Lys-345, Phe-367, Glu-427, Lys-432, Lys-449, and Lys-451. Catalysis depends on Lys-273, which acts as the N6-AMP-lysine intermediate. Glu-331 is a binding site for Mg(2+). Glu-427 provides a ligand contact to Mg(2+). Positions 610–620 are required for catalytic activity; it reads LATKHLHVGDD. BRCT domains are found at residues 654-743 and 808-911; these read KVSN…PRFM and SPLS…QYLL.

This sequence belongs to the ATP-dependent DNA ligase family. As to quaternary structure, interacts with XRCC4; the LIG4-XRCC4 subcomplex has a 1:2 stoichiometry and XRCC4 is required for LIG4 stability. Component of the core long-range non-homologous end joining (NHEJ) complex (also named DNA-PK complex) composed of PRKDC, LIG4, XRCC4, XRCC6/Ku70, XRCC5/Ku86 and NHEJ1/XLF. Additional component of the NHEJ complex includes PAXX. Following autophosphorylation, PRKDC dissociates from DNA, leading to formation of the short-range NHEJ complex, composed of LIG4, XRCC4, XRCC6/Ku70, XRCC5/Ku86 and NHEJ1/XLF. Interacts with DCLRE1C; the interaction is direct. Interacts with APLF. It depends on Mg(2+) as a cofactor.

It is found in the nucleus. The catalysed reaction is ATP + (deoxyribonucleotide)n-3'-hydroxyl + 5'-phospho-(deoxyribonucleotide)m = (deoxyribonucleotide)n+m + AMP + diphosphate.. Functionally, DNA ligase involved in DNA non-homologous end joining (NHEJ); required for double-strand break (DSB) repair and V(D)J recombination. Catalyzes the NHEJ ligation step of the broken DNA during DSB repair by resealing the DNA breaks after the gap filling is completed. Joins single-strand breaks in a double-stranded polydeoxynucleotide in an ATP-dependent reaction. LIG4 is mechanistically flexible: it can ligate nicks as well as compatible DNA overhangs alone, while in the presence of XRCC4, it can ligate ends with 2-nucleotides (nt) microhomology and 1-nt gaps. Forms a subcomplex with XRCC4; the LIG4-XRCC4 subcomplex is responsible for the NHEJ ligation step and XRCC4 enhances the joining activity of LIG4. Binding of the LIG4-XRCC4 complex to DNA ends is dependent on the assembly of the DNA-dependent protein kinase complex DNA-PK to these DNA ends. LIG4 regulates nuclear localization of XRCC4. The polypeptide is DNA ligase 4 (Mus musculus (Mouse)).